The sequence spans 217 residues: ATP phosphoribosyltransferase (217 aa).

This sequence belongs to the ATP phosphoribosyltransferase family. Short subfamily. In terms of assembly, heteromultimer composed of HisG and HisZ subunits.

It is found in the cytoplasm. It catalyses the reaction 1-(5-phospho-beta-D-ribosyl)-ATP + diphosphate = 5-phospho-alpha-D-ribose 1-diphosphate + ATP. It participates in amino-acid biosynthesis; L-histidine biosynthesis; L-histidine from 5-phospho-alpha-D-ribose 1-diphosphate: step 1/9. Its function is as follows. Catalyzes the condensation of ATP and 5-phosphoribose 1-diphosphate to form N'-(5'-phosphoribosyl)-ATP (PR-ATP). Has a crucial role in the pathway because the rate of histidine biosynthesis seems to be controlled primarily by regulation of HisG enzymatic activity. The protein is ATP phosphoribosyltransferase of Parasynechococcus marenigrum (strain WH8102).